Here is a 780-residue protein sequence, read N- to C-terminus: MVDFLPKVTEINPPSEGNDGEDNIKPLSSGSEQRPLKEEGQQGGRRHHRRLSSMHEYFDPFSNAEVYYGPITDPRKQSKIHRLNRTRTMSVFNKVSDFKNGMKDYTLKRRGSEDDSFLSSQGNRRFYIDNVDLALDELLASEDTDKNHQITIEDTGPKVIKVGTANSNGFKHVNVRGTYMLSNLLQELTIAKSFGRHQIFLDEARINENPVDRLSRLITTQFWTSLTRRVDLYNIAEIARDSKIDTPGAKNPRIYVPYNCPEQYEFYIQASQMNPSLKLEVEYLPKDITAEYVKSLNDTPGLLALAMEEHVNPSTGERSLVGYPYAVPGGRFNELYGWDSYLMALGLIESNKVDVARGMVEHFIFEIDHYSKILNANRSYYLCRSQPPFLTDMALLVFEKIGGKNNPNAIQLLKRAFRAAIKEYKEVWMSSPRLDSLTGLSCYHSDGIGIPPETEPDHFDTILLPYAEKYNVTLEKLRYLYNEGMIKEPKLDAFFLHDRAVRESGHDTTYRFEGVCAYLATIDLNSLLYKYEKDIAFVIKEYFGNEYKDENDGTVTDSEHWEELAELRKTRINKYMWDEDSGFFFYYNTKLKCRTSYESATTFWSLWAGLATEEQAKITVEKALPQLEMLGGLVACTEKSRGPISIDRPIRQWDYPFGWAPHQILAWKGLSAYGYQQVATRLAYRWLYMITKSFVDYNGMVVEKYDVTRGTDPHRVDAEYGNQGADFKGVATEGFGWVNTSYLLGLKYMNNHARRALAACSPPLPFFNSLKPSEKKLYYL.

The segment at 1–48 (MVDFLPKVTEINPPSEGNDGEDNIKPLSSGSEQRPLKEEGQQGGRRHH) is disordered. Phosphoserine occurs at positions 52 and 53. Phosphothreonine is present on Thr88. Position 112 is a phosphoserine (Ser112). Substrate contacts are provided by residues Arg331, 338 to 339 (WD), Asn375, Arg384, 384 to 386 (RSQ), and Gly505. Active-site proton donor/acceptor residues include Asp507 and Glu703.

The protein belongs to the glycosyl hydrolase 37 family.

The catalysed reaction is alpha,alpha-trehalose + H2O = alpha-D-glucose + beta-D-glucose. This chain is Probable trehalase (NTH2), found in Saccharomyces cerevisiae (strain ATCC 204508 / S288c) (Baker's yeast).